A 329-amino-acid polypeptide reads, in one-letter code: DNA-directed RNA polymerase subunit alpha (329 aa).

The tract at residues 1–234 (MQGSVTEFLK…EQLDAFVELR (234 aa)) is alpha N-terminal domain (alpha-NTD). Positions 248 to 329 (FDPILLRPVD…WPPASLADDL (82 aa)) are alpha C-terminal domain (alpha-CTD).

This sequence belongs to the RNA polymerase alpha chain family. In terms of assembly, homodimer. The RNAP catalytic core consists of 2 alpha, 1 beta, 1 beta' and 1 omega subunit. When a sigma factor is associated with the core the holoenzyme is formed, which can initiate transcription.

The catalysed reaction is RNA(n) + a ribonucleoside 5'-triphosphate = RNA(n+1) + diphosphate. Functionally, DNA-dependent RNA polymerase catalyzes the transcription of DNA into RNA using the four ribonucleoside triphosphates as substrates. This chain is DNA-directed RNA polymerase subunit alpha, found in Shewanella amazonensis (strain ATCC BAA-1098 / SB2B).